The sequence spans 608 residues: Serine/threonine-protein kinase ROP17 (608 aa).

A signal peptide spans 1 to 21 (MELVLCFVIITISGVIRESSA). Asn76 is a glycosylation site (N-linked (GlcNAc...) asparagine). Residues 283 to 579 (LKKRGFLGGG…QQALEQFSLL (297 aa)) form the Protein kinase domain. ATP-binding positions include 289 to 297 (LGGGGFGLV) and Lys312. Catalysis depends on Asp436, which acts as the Proton acceptor.

It belongs to the protein kinase superfamily. Ser/Thr protein kinase family. In terms of assembly, interacts with ROP5; interaction with ROP5 does not affect kinase activity. Interacts with human BCL2; the interaction probably promotes BCL2 phosphorylation and degradation.

The protein localises to the secreted. It localises to the cytoplasmic vesicle. Its subcellular location is the secretory vesicle. It is found in the rhoptry. The protein resides in the parasitophorous vacuole membrane. The enzyme catalyses L-threonyl-[protein] + ATP = O-phospho-L-threonyl-[protein] + ADP + H(+). It catalyses the reaction L-seryl-[protein] + ATP = O-phospho-L-seryl-[protein] + ADP + H(+). Functionally, protein kinase. Virulence factor. Promotes migration of Toxoplasma-infected macrophages through collagen matrix, facilitating parasite transport through tissues and systemic dissemination. Plays a role in the translocation of dense granule effectors, such as GRA16 and GRA24, across the parasitophorous vacuole membrane in Toxoplasma-infected host cells. Phosphorylates mouse IRGB6 (TGTP1/TGTP2), an immunity-related GTPase (IRG) that protects mice from infection by certain intracellular pathogens; the phosphorylation leads to the disassembly of IRGB6 polymers into monomers and dimers. May modulate gene expression in human cells. Promotes autophagy in human cells via modulation of the BCL2-BECN1 pathway. The sequence is that of Serine/threonine-protein kinase ROP17 from Toxoplasma gondii.